The primary structure comprises 534 residues: Cytokinin dehydrogenase 1 (534 aa).

The signal sequence occupies residues 1–18 (MAVVYYLLLAGLIACSHA). Asn52, Asn63, and Asn89 each carry an N-linked (GlcNAc...) asparagine glycan. Residues 65–245 (TSALPAAVLY…TRARIAVEPA (181 aa)) form the FAD-binding PCMH-type domain. Residues Phe100, Gly102, Arg103, and Gly104 each contribute to the FAD site. His105 carries the pros-8alpha-FAD histidine modification. Residues Ser106 and Gln110 each coordinate FAD. Asn134 carries N-linked (GlcNAc...) asparagine glycosylation. Residues Asp169, Thr174, Ser180, Ile184, and Ile235 each contribute to the FAD site. Position 169 (Asp169) interacts with N(6)-dimethylallyladenine. A trans-zeatin-binding site is contributed by Asp169. Asn294, Asn323, and Asn338 each carry an N-linked (GlcNAc...) asparagine glycan. Glu381 serves as a coordination point for N(6)-dimethylallyladenine. Glu381 is a trans-zeatin binding site. The N-linked (GlcNAc...) asparagine glycan is linked to Asn434. Position 456 (Ser456) interacts with trans-zeatin. FAD contacts are provided by Tyr491, Ser527, and Gln530.

It belongs to the oxygen-dependent FAD-linked oxidoreductase family. Monomer. Requires FAD as cofactor. Post-translationally, glycosylated; with approximately 10 hexose residues per site. Expressed in immature kernels and unpollinated cobs. Weakly expressed in kernels harvested two weeks after anthesis.

It is found in the secreted. It localises to the extracellular space. It carries out the reaction N(6)-dimethylallyladenine + A + H2O = 3-methyl-2-butenal + adenine + AH2. Its activity is regulated as follows. Competitive inhibition by phenylureas. Functionally, catalyzes the oxidation of cytokinins, a family of N(6)-substituted adenine derivatives that are plant hormones, where the substituent is an isopentenyl group. Cleaves trans-zeatin, N(6)-dimethylallyladenine (isopentenyladenine), isopentenyladenosine, zeatin riboside and cis-zeatin, but not dihydrozeatin, kinetin and benzylaminopurine. In Zea mays (Maize), this protein is Cytokinin dehydrogenase 1 (CKX1).